The sequence spans 1905 residues: Microtubule cross-linking factor 1 (1905 aa).

The interval 1–249 is necessary for colocalization and binding with microtubules; the sequence is METLNGPAGG…SSDREPPRGA (249 aa). The segment at 1–329 is disordered; that stretch reads METLNGPAGG…SLGEQSRLVP (329 aa). A necessary for self-assembly, microtubule bundling activity and apicobasal microtubule organization region spans residues 1 to 508; the sequence is METLNGPAGG…QDDSADLRCQ (508 aa). Residues 22 to 40 show a composition bias toward basic residues; sequence QHHRHHHLHPVAERRRLHR. Low complexity-rich tracts occupy residues 63–95 and 115–130; these read VPSS…AAPG and AGAR…LGSR. 2 positions are modified to phosphoserine: Ser-77 and Ser-87. Ser-217, Ser-221, and Ser-263 each carry phosphoserine. Positions 268-283 are enriched in low complexity; that stretch reads ALLAAPLAAGACPGGR. Coiled coils occupy residues 330 to 404, 432 to 483, and 513 to 718; these read AAEE…EQKS, SVRL…SSLK, and KEEA…LQHE. Disordered regions lie at residues 544–563, 601–631, 671–694, 737–800, and 842–867; these read YGDV…PSTR, DMRG…LESS, FEPP…GAPL, LRAP…SEPC, and AGLR…GDQQ. Ser-549 carries the phosphoserine modification. Over residues 601–616 the composition is skewed to basic and acidic residues; sequence DMRGQQEREGPGRDHA. Ser-618 carries the post-translational modification Phosphoserine. Residue Thr-621 is modified to Phosphothreonine. Positions 680 to 692 are enriched in gly residues; that stretch reads LGEGASPGAGGGA. The residue at position 685 (Ser-685) is a Phosphoserine. The segment covering 741-770 has biased composition (basic and acidic residues); sequence SPRDSDAESDAGKKESDGEESRLPQPKREG. Ser-776 is subject to Phosphoserine. The segment covering 857–866 has biased composition (acidic residues); it reads GEEEQGEGDQ. Residues Ser-901, Ser-923, Lys-941, and Thr-975 each carry the phosphoserine modification. The interval 1080 to 1100 is disordered; that stretch reads GVQGGHQADGPDHDSDRGCGF. Coiled-coil stretches lie at residues 1143–1201 and 1238–1278; these read KALL…ELGS and EKNW…KENS. Residues 1265-1382 form a necessary for interaction with MARK2 and apicobasal microtubule bundle formation in polarized epithelial cells region; sequence EFLWRIEQLQ…EENHKGNLQR (118 aa). Residue Ser-1278 is modified to Phosphoserine. The disordered stretch occupies residues 1346–1384; sequence ALSLDDEPEEPPAHRPEREFRNRLPEEEENHKGNLQRAV. Residues 1356 to 1377 are compositionally biased toward basic and acidic residues; sequence PPAHRPEREFRNRLPEEEENHK. Phosphoserine occurs at positions 1385, 1388, and 1399. A Phosphothreonine modification is found at Thr-1417. Ser-1421 carries the post-translational modification Phosphoserine. Tyr-1427 carries the post-translational modification Phosphotyrosine. The tract at residues 1485–1505 is disordered; sequence DTMTSPEHCQKQPLRSHVLTE. A phosphoserine mark is found at Ser-1514, Ser-1523, Ser-1561, Ser-1578, Ser-1583, Ser-1592, and Ser-1661. The disordered stretch occupies residues 1524 to 1569; that stretch reads ITAAGGEGPFPTSRARGSPGDTKGGPPEPMLSRWPCTSPRHSRDYV. 4 disordered regions span residues 1655–1689, 1707–1756, 1782–1842, and 1863–1905; these read GSGV…SRQV, PKYG…PVHT, GLRA…APPG, and KEER…PWGL. Phosphothreonine is present on residues Thr-1667 and Thr-1675. Low complexity predominate over residues 1678–1687; that stretch reads SSPSRSLRSR. The tract at residues 1678-1773 is necessary for colocalization and binding with microtubules; sequence SSPSRSLRSR…SLFNIIDHSP (96 aa). Ser-1679 and Ser-1683 each carry phosphoserine. Over residues 1744-1756 the composition is skewed to polar residues; it reads ARSTTTRESPVHT. 4 positions are modified to phosphoserine: Ser-1791, Ser-1808, Ser-1812, and Ser-1814.

The protein belongs to the SOGA family. In terms of assembly, homodimer. Associates (via N- and C-terminus domains) with microtubule filaments. Interacts with MARK2; the interaction is direct. Post-translationally, phosphorylated during mitosis in a CDK1-dependent manner.

The protein localises to the lateral cell membrane. Its subcellular location is the apical cell membrane. It is found in the cytoplasm. The protein resides in the cytoskeleton. It localises to the spindle pole. The protein localises to the midbody. Its function is as follows. Microtubule-associated factor involved in the late phase of epithelial polarization and microtubule dynamics regulation. Plays a role in the development and maintenance of non-centrosomal microtubule bundles at the lateral membrane in polarized epithelial cells. Required for faithful chromosome segregation during mitosis. In Homo sapiens (Human), this protein is Microtubule cross-linking factor 1 (MTCL1).